The following is a 631-amino-acid chain: Chaperone protein HtpG (631 aa).

The tract at residues 1 to 338 (MILKEQETLG…CNDLPLNISR (338 aa)) is a; substrate-binding. The tract at residues 339 to 554 (EMLQHNRITQ…SNNMTTHMAK (216 aa)) is b. The tract at residues 555–631 (LIVASGQNKP…KLLNHDTIVN (77 aa)) is c.

The protein belongs to the heat shock protein 90 family. As to quaternary structure, homodimer.

It localises to the cytoplasm. Its function is as follows. Molecular chaperone. Has ATPase activity. This chain is Chaperone protein HtpG, found in Baumannia cicadellinicola subsp. Homalodisca coagulata.